Reading from the N-terminus, the 317-residue chain is 17-beta-hydroxysteroid dehydrogenase type 6 (317 aa).

Residues 1 to 17 (MWLYLAAFVGLYYLLHW) form the signal peptide. 33–57 (FITGCDSGFGNLLARQLDARGLRVL) lines the NAD(+) pocket. Asn161 is a glycosylation site (N-linked (GlcNAc...) asparagine). Ser164 provides a ligand contact to substrate. Tyr176 acts as the Proton acceptor in catalysis. Asn215 and Asn256 each carry an N-linked (GlcNAc...) asparagine glycan.

It belongs to the short-chain dehydrogenases/reductases (SDR) family. Detected in liver and prostate (at protein level). Detected in adult liver, lung, brain, placenta, prostate, adrenal gland, testis, mammary gland, spleen, spinal cord and uterus. Detected in caudate nucleus, and at lower levels in amygdala, corpus callosum, hippocampus, substantia nigra and thalamus. Detected in fetal lung, liver and brain.

It localises to the microsome membrane. The protein localises to the early endosome membrane. The enzyme catalyses all-trans-retinol--[retinol-binding protein] + NAD(+) = all-trans-retinal--[retinol-binding protein] + NADH + H(+). It carries out the reaction all-trans-retinol + NAD(+) = all-trans-retinal + NADH + H(+). It catalyses the reaction androsterone + NAD(+) = 5alpha-androstan-3,17-dione + NADH + H(+). The catalysed reaction is testosterone + NAD(+) = androst-4-ene-3,17-dione + NADH + H(+). The enzyme catalyses 5alpha-androstane-3alpha,17beta-diol + NAD(+) = 17beta-hydroxy-5alpha-androstan-3-one + NADH + H(+). It carries out the reaction 17beta-estradiol + NAD(+) = estrone + NADH + H(+). It catalyses the reaction 17beta-estradiol + NADP(+) = estrone + NADPH + H(+). The catalysed reaction is 3alpha-hydroxy-5alpha-pregnan-20-one + NAD(+) = 5alpha-pregnane-3,20-dione + NADH + H(+). The enzyme catalyses 5alpha-androstane-3beta,17beta-diol + NAD(+) = 17beta-hydroxy-5alpha-androstan-3-one + NADH + H(+). It carries out the reaction 3beta-hydroxy-5alpha-androstan-17-one + NAD(+) = 5alpha-androstan-3,17-dione + NADH + H(+). Functionally, NAD-dependent oxidoreductase with broad substrate specificity that shows both oxidative and reductive activity (in vitro). Has 17-beta-hydroxysteroid dehydrogenase activity towards various steroids (in vitro). Converts 5-alpha-androstan-3-alpha,17-beta-diol to androsterone and estradiol to estrone (in vitro). Has 3-alpha-hydroxysteroid dehydrogenase activity towards androsterone (in vitro). Has retinol dehydrogenase activity towards all-trans-retinol (in vitro). Can convert androsterone to epi-androsterone. Androsterone is first oxidized to 5-alpha-androstane-3,17-dione and then reduced to epi-andosterone. Can act on both C-19 and C-21 3-alpha-hydroxysteroids. This is 17-beta-hydroxysteroid dehydrogenase type 6 (HSD17B6) from Homo sapiens (Human).